The sequence spans 1172 residues: Serine/threonine-protein kinase Nek10 (1172 aa).

Residues 209–251 (GAHKTLVNLLGARDTNVLLGSLLALASLAESQECREKISELNI) form an ARM repeat. A coiled-coil region spans residues 481 to 514 (YEELVSKLNLLVEDELKQIAENIESINQNKAPLK). Positions 519–712 (YAILDHLGSG…SEPYGEKADV (194 aa)) constitute a Protein kinase domain. Residues 525–533 (LGSGAFGCV) and Lys548 each bind ATP. Asp655 functions as the Proton acceptor in the catalytic mechanism. 2 disordered regions span residues 855 to 875 (SELSESADLPPEGFQASYGKD) and 898 to 954 (TYSE…GSRP). The segment covering 919–945 (PLKESTFNILKRSFSASGGERQSQTRD) has biased composition (polar residues).

Belongs to the protein kinase superfamily. NEK Ser/Thr protein kinase family. NIMA subfamily. As to quaternary structure, interacts with RAF1 and MAP2K1; the interaction is direct with RAF1 and required for ERK1/2-signaling pathway activation in response to UV irradiation. The cofactor is Mg(2+). Expressed in the lung.

It catalyses the reaction L-seryl-[protein] + ATP = O-phospho-L-seryl-[protein] + ADP + H(+). The enzyme catalyses L-threonyl-[protein] + ATP = O-phospho-L-threonyl-[protein] + ADP + H(+). In terms of biological role, plays a role in the cellular response to UV irradiation. Mediates G2/M cell cycle arrest, MEK autoactivation and ERK1/2-signaling pathway activation in response to UV irradiation. In ciliated cells of airways, it is involved in the regulation of mucociliary transport. In Homo sapiens (Human), this protein is Serine/threonine-protein kinase Nek10.